Here is a 398-residue protein sequence, read N- to C-terminus: MASADKGLEEIQEGQIESNYDETVDSFDTMNLKPELLRGVYAYGFERPSAIQQRAIMPVIKGHDVIAQAQSGTGKTATFSISVLQKLDPNVKQCQALILAPTRELAQQIQKVVVAIGDFMNVECHACIGGTSVRDDMKALQDGPQVVVGTPGRVHDMIQRRFLKTDSMKMFVLDEADEMLSRGFTEQIYDIFQLLPQSTQVVLLSATMPQDVLEVTTKFMRDPVRILVKKAELTLEGIKQFYIAVEKEDWKLDTLSDLYETVTITQAVIFCNTRRKVDWLTDKLTARDFTVSAMHGDMDQGQRDLIMKEFRSGSSRVLIATDLLARGIDVQQVSLVINYDLPANRENYIHRIGRGGRFGRKGVAINFVTAEDVRMMREIEQFYSTQIEEMPMNVADLI.

The Q motif signature appears at 25–53 (DSFDTMNLKPELLRGVYAYGFERPSAIQQ). The 171-residue stretch at 56–226 (IMPVIKGHDV…TKFMRDPVRI (171 aa)) folds into the Helicase ATP-binding domain. 69-76 (AQSGTGKT) serves as a coordination point for ATP. The short motif at 174–177 (DEAD) is the DEAD box element. The Helicase C-terminal domain maps to 237–398 (GIKQFYIAVE…EMPMNVADLI (162 aa)).

The protein belongs to the DEAD box helicase family. eIF4A subfamily. Component of the eIF4F complex, which composition varies with external and internal environmental conditions. It is composed of at least eIF4A, eIF4E and eIF4G.

The protein localises to the cytoplasm. It carries out the reaction ATP + H2O = ADP + phosphate + H(+). In terms of biological role, ATP-dependent RNA helicase which is a subunit of the eIF4F complex involved in cap recognition and is required for mRNA binding to ribosome. In the current model of translation initiation, eIF4A unwinds RNA secondary structures in the 5'-UTR of mRNAs which is necessary to allow efficient binding of the small ribosomal subunit, and subsequent scanning for the initiator codon. The chain is ATP-dependent RNA helicase eIF4A (tif1) from Sclerotinia sclerotiorum (strain ATCC 18683 / 1980 / Ss-1) (White mold).